The following is a 577-amino-acid chain: Arginine--tRNA ligase (577 aa).

A 'HIGH' region motif is present at residues 122 to 132; it reads PNVAKEMHVGH.

This sequence belongs to the class-I aminoacyl-tRNA synthetase family. In terms of assembly, monomer.

It is found in the cytoplasm. The enzyme catalyses tRNA(Arg) + L-arginine + ATP = L-arginyl-tRNA(Arg) + AMP + diphosphate. The polypeptide is Arginine--tRNA ligase (Vibrio parahaemolyticus serotype O3:K6 (strain RIMD 2210633)).